A 213-amino-acid polypeptide reads, in one-letter code: FMN-dependent NADH:quinone oxidoreductase (213 aa).

It belongs to the azoreductase type 1 family. In terms of assembly, homodimer. The cofactor is FMN.

The catalysed reaction is 2 a quinone + NADH + H(+) = 2 a 1,4-benzosemiquinone + NAD(+). It carries out the reaction N,N-dimethyl-1,4-phenylenediamine + anthranilate + 2 NAD(+) = 2-(4-dimethylaminophenyl)diazenylbenzoate + 2 NADH + 2 H(+). Its function is as follows. Quinone reductase that provides resistance to thiol-specific stress caused by electrophilic quinones. Functionally, also exhibits azoreductase activity. Catalyzes the reductive cleavage of the azo bond in aromatic azo compounds to the corresponding amines. In Streptococcus agalactiae serotype III (strain NEM316), this protein is FMN-dependent NADH:quinone oxidoreductase.